Consider the following 223-residue polypeptide: ATP phosphoribosyltransferase (223 aa).

The protein belongs to the ATP phosphoribosyltransferase family. Short subfamily. In terms of assembly, heteromultimer composed of HisG and HisZ subunits.

The protein resides in the cytoplasm. It catalyses the reaction 1-(5-phospho-beta-D-ribosyl)-ATP + diphosphate = 5-phospho-alpha-D-ribose 1-diphosphate + ATP. It participates in amino-acid biosynthesis; L-histidine biosynthesis; L-histidine from 5-phospho-alpha-D-ribose 1-diphosphate: step 1/9. Catalyzes the condensation of ATP and 5-phosphoribose 1-diphosphate to form N'-(5'-phosphoribosyl)-ATP (PR-ATP). Has a crucial role in the pathway because the rate of histidine biosynthesis seems to be controlled primarily by regulation of HisG enzymatic activity. The chain is ATP phosphoribosyltransferase from Halothermothrix orenii (strain H 168 / OCM 544 / DSM 9562).